Consider the following 463-residue polypeptide: Quinolone resistance protein NorB (463 aa).

The next 14 membrane-spanning stretches (helical) occupy residues 17-37 (IGIV…VNVV), 53-73 (IAVS…GGLA), 86-106 (IILN…LLLI), 107-127 (IGRL…LSII), 142-162 (YWSI…GAVA), 165-185 (LGWR…LFLI), 201-221 (FDIK…ILIT), 230-250 (SLLF…FIVL), 273-293 (TASN…NTFV), 299-319 (YSSL…LIMI), 334-354 (PMLI…LTFL), 357-377 (IFYV…LGIY), 403-423 (MASA…YAIV), and 435-455 (IALW…LLLV).

Belongs to the major facilitator superfamily. TCR/Tet family.

It localises to the cell membrane. Multidrug efflux pump that acts independently of NorA and is one of the factors that confers resistance against diverse quinolones and chemical compounds. The protein is Quinolone resistance protein NorB (norB) of Staphylococcus aureus (strain USA300).